Here is a 550-residue protein sequence, read N- to C-terminus: Metal transporter Nramp3 (550 aa).

A compositionally biased stretch (polar residues) spans 1–26 (MSGPMQRSSQPQFISSVERNNQSNGP). A disordered region spans residues 1-30 (MSGPMQRSSQPQFISSVERNNQSNGPGTPL). 12 helical membrane passes run 50–70 (LFSYIGPGFLVSIAYIDPGNF), 83–103 (ELLWIILIASCAALIIQSLAA), 127–147 (FILWILAELAVVACDIPEVIG), 158–178 (IPVWCGVLITGLSTLMLLLLQ), 185–205 (LEFLIAILVSLIATCFLVELG), 233–253 (ISLLGAMVMPHNLFLHSALVL), 276–296 (AFALTIAFLINISIISVSGAV), 333–353 (LFAVALLASGQSSTITGTYAG), 368–390 (WIRNLLTRSLAILPSLIVSIIGG), 397–417 (LIIIASMILSFELPFALVPLL), 435–455 (ISVITWGIGSFIVVINTYFLI), and 473–493 (VFSGIFGFLGMLIYMAAILYL). The disordered stretch occupies residues 523 to 550 (GEGSLGHLPREDISSMQLPQQRTASDLD). Polar residues predominate over residues 536 to 550 (SSMQLPQQRTASDLD).

This sequence belongs to the NRAMP (TC 2.A.55) family.

It localises to the membrane. Probable metal transporter. This Oryza sativa subsp. japonica (Rice) protein is Metal transporter Nramp3 (NRAMP3).